A 243-amino-acid polypeptide reads, in one-letter code: 1-(5-phosphoribosyl)-5-[(5-phosphoribosylamino)methylideneamino] imidazole-4-carboxamide isomerase (243 aa).

The Proton acceptor role is filled by Asp8. Asp129 acts as the Proton donor in catalysis.

The protein belongs to the HisA/HisF family.

It is found in the cytoplasm. The catalysed reaction is 1-(5-phospho-beta-D-ribosyl)-5-[(5-phospho-beta-D-ribosylamino)methylideneamino]imidazole-4-carboxamide = 5-[(5-phospho-1-deoxy-D-ribulos-1-ylimino)methylamino]-1-(5-phospho-beta-D-ribosyl)imidazole-4-carboxamide. Its pathway is amino-acid biosynthesis; L-histidine biosynthesis; L-histidine from 5-phospho-alpha-D-ribose 1-diphosphate: step 4/9. In Moorella thermoacetica (strain ATCC 39073 / JCM 9320), this protein is 1-(5-phosphoribosyl)-5-[(5-phosphoribosylamino)methylideneamino] imidazole-4-carboxamide isomerase.